A 160-amino-acid chain; its full sequence is Cytochrome b6-f complex subunit 4 (160 aa).

The next 3 membrane-spanning stretches (helical) occupy residues L36 to V56, L95 to E115, and P127 to A147.

The protein belongs to the cytochrome b family. PetD subfamily. As to quaternary structure, the 4 large subunits of the cytochrome b6-f complex are cytochrome b6, subunit IV (17 kDa polypeptide, PetD), cytochrome f and the Rieske protein, while the 4 small subunits are PetG, PetL, PetM and PetN. The complex functions as a dimer.

It is found in the cellular thylakoid membrane. In terms of biological role, component of the cytochrome b6-f complex, which mediates electron transfer between photosystem II (PSII) and photosystem I (PSI), cyclic electron flow around PSI, and state transitions. The sequence is that of Cytochrome b6-f complex subunit 4 from Prochlorothrix hollandica.